The following is a 145-amino-acid chain: 3-dehydroquinate dehydratase (145 aa).

Catalysis depends on Y24, which acts as the Proton acceptor. Substrate-binding residues include N76, H82, and D89. Residue H102 is the Proton donor of the active site. Substrate is bound by residues 103–104 and R113; that span reads VS.

This sequence belongs to the type-II 3-dehydroquinase family. In terms of assembly, homododecamer.

The enzyme catalyses 3-dehydroquinate = 3-dehydroshikimate + H2O. It participates in metabolic intermediate biosynthesis; chorismate biosynthesis; chorismate from D-erythrose 4-phosphate and phosphoenolpyruvate: step 3/7. Its function is as follows. Catalyzes a trans-dehydration via an enolate intermediate. The polypeptide is 3-dehydroquinate dehydratase (Herminiimonas arsenicoxydans).